The primary structure comprises 852 residues: Metastasis-associated in colon cancer protein 1 (852 aa).

The residue at position 19 (Ser19) is a Phosphoserine. The region spanning 212–349 is the ZU5 domain; it reads VTIACKVNHQ…LSQVMYLVVA (138 aa). The region spanning 549–619 is the SH3 domain; that stretch reads NFSNYGVTLK…HCKNVKVISK (71 aa).

In terms of assembly, interacts with FASLG. In terms of tissue distribution, preferentially expressed in metastasizing tumors.

It localises to the cytoplasm. Its subcellular location is the nucleus. Acts as a transcription activator for MET and as a key regulator of HGF-MET signaling. Promotes cell motility, proliferation and hepatocyte growth factor (HGF)-dependent scattering in vitro and tumor growth and metastasis in vivo. This is Metastasis-associated in colon cancer protein 1 (MACC1) from Homo sapiens (Human).